The sequence spans 500 residues: Cytochrome P450 2D16 (500 aa).

S249 is subject to Phosphoserine. C446 provides a ligand contact to heme.

It belongs to the cytochrome P450 family. Heme is required as a cofactor. As to expression, expressed at high levels in the inner zone of the adrenal cortex.

The protein localises to the endoplasmic reticulum membrane. It localises to the microsome membrane. It catalyses the reaction an organic molecule + reduced [NADPH--hemoprotein reductase] + O2 = an alcohol + oxidized [NADPH--hemoprotein reductase] + H2O + H(+). Functionally, cytochromes P450 are a group of heme-thiolate monooxygenases. In liver microsomes, this enzyme is involved in an NADPH-dependent electron transport pathway. It oxidizes a variety of structurally unrelated compounds, including steroids, fatty acids, and xenobiotics. This chain is Cytochrome P450 2D16 (CYP2D16), found in Cavia porcellus (Guinea pig).